We begin with the raw amino-acid sequence, 160 residues long: uncharacterized protein (160 aa).

The protein resides in the cytoplasm. It localises to the nucleus. This is an uncharacterized protein from Schizosaccharomyces pombe (strain 972 / ATCC 24843) (Fission yeast).